The primary structure comprises 378 residues: Chaperone protein DnaJ (378 aa).

One can recognise a J domain in the interval 5-70; the sequence is DYYQILGIPK…EKRTAYDQYG (66 aa). A CR-type zinc finger spans residues 133-211; it reads GTTKEIRIPT…CRGQGRIKTN (79 aa). Residues Cys-146, Cys-149, Cys-163, Cys-166, Cys-185, Cys-188, Cys-199, and Cys-202 each coordinate Zn(2+). 4 CXXCXGXG motif repeats span residues 146–153, 163–170, 185–192, and 199–206; these read CKTCYGMG, CSTCHGKG, CPTCNGIG, and CRMCRGQG.

The protein belongs to the DnaJ family. As to quaternary structure, homodimer. Zn(2+) serves as cofactor.

Its subcellular location is the cytoplasm. In terms of biological role, participates actively in the response to hyperosmotic and heat shock by preventing the aggregation of stress-denatured proteins and by disaggregating proteins, also in an autonomous, DnaK-independent fashion. Unfolded proteins bind initially to DnaJ; upon interaction with the DnaJ-bound protein, DnaK hydrolyzes its bound ATP, resulting in the formation of a stable complex. GrpE releases ADP from DnaK; ATP binding to DnaK triggers the release of the substrate protein, thus completing the reaction cycle. Several rounds of ATP-dependent interactions between DnaJ, DnaK and GrpE are required for fully efficient folding. Also involved, together with DnaK and GrpE, in the DNA replication of plasmids through activation of initiation proteins. This Buchnera aphidicola subsp. Schizaphis graminum (strain Sg) protein is Chaperone protein DnaJ.